Consider the following 1055-residue polypeptide: MKSEDYSYARMAPDIHEERQYRCEECDQLFESKTELSDHQKYPCVTPHSAFSLVENSFPPSLNDDSDLTEMQHTHECKECDQVFPDMQSLEKHLLSHTEEREYKCDQCPKAFNWKSNLIRHQMSHDTGKHYECENCSKQVFTDPSNLQRHIRSQHVGARAHACSDCGKTFATSSGLKQHKHIHSSVKPFVCEVCHKSYTQFSNLCRHKRMHADCRTQIKCKDCGQMFSTTSSLNKHRRFCEGKNHFAAGGLFGQGISLPGTPAMDKASMISMNHANAGLADYFGASRHTAGLTFPTAPGFPFSFPGLFPSSLYHRPPFIPPASPVKGLPGVEQSSKSQSPHVNQPQVLPATQDILKALSKHPSVDENKALEFITESNLNQRPHEKISDHSESSDLDDVSTPSGSDLETTSGSDLESDIESDKDKLKENGKLYKDKMSPLQSLAALNSKREYNNHSVFSPCLEEQTAVTGAVNDSIKAIASIAEKYFGSTGLVGLPDKKGTTLPYPSMFPLPFFPAFSQSMYTFPDRDVRPVPLKIEPESPKETKKVQKGKTESPFDLTTKRKEEKASPNVPSKSGAPTSSNHDQPLDLSMGSRSRAATTKQTEPRKNHIFNEKKDMDPELPKTSEHCLQHARPAPFFMDPIYRVEKRKPMDPLEILKEKYLRPSPGFLFHPQFPMPDQRTWMSAIENMAEKLESFNALKPEANNLIQSVPSMFNFRASSSALPENLLRKGKERYTCRYCGKIFPRSANLTRHLRTHTGEQPYRCKYCDRSFSISSNLQRHVRNIHNKEKPFKCHLCDRCFGQQTNLDRHLKKHENGNLSGTAASSPHSEIEGTGPILDEKEDSYFNEIRNFIGNSSHNKQSPLNSDERINGSHDKIMLAGQNSDILDDDEDEAILDEDDEESDIAVKVMKEPNTSVMLEKCSVDEYEEGGKSEVNSKVSPSRYDDEDDDDDEEEDFKKSLSALDHIRHFTDSLKMRKMDDGQFNDAELSAFTASHLTDDLKHPLYRKSKSQAYAMMLSLSDQESLHPTTHTSSSMWHNLARAAAESTALHSVSHV.

3 consecutive C2H2-type zinc fingers follow at residues 21–48 (YRCEECDQLFESKTELSDHQKYPCVTPH), 75–97 (HECKECDQVFPDMQSLEKHLLSH), and 103–125 (YKCDQCPKAFNWKSNLIRHQMSH). Residues 131–155 (YECENCSKQVFTDPSNLQRHIRSQH) form a C2H2-type 4; degenerate zinc finger. 2 C2H2-type zinc fingers span residues 161–183 (HACSDCGKTFATSSGLKQHKHIH) and 189–211 (FVCEVCHKSYTQFSNLCRHKRMH). The segment at 218 to 240 (IKCKDCGQMFSTTSSLNKHRRFC) adopts a C2H2-type 7; atypical zinc-finger fold. 3 disordered regions span residues 324–345 (PVKGLPGVEQSSKSQSPHVNQP), 372–423 (FITE…SDKD), and 531–621 (VPLK…PELP). The span at 332–345 (EQSSKSQSPHVNQP) shows a compositional bias: polar residues. Basic and acidic residues predominate over residues 381–392 (RPHEKISDHSES). The span at 399–413 (STPSGSDLETTSGSD) shows a compositional bias: polar residues. Residues 422–435 (KDKLKENGKLYKDK) carry the Nuclear localization signal motif. Residues 531-566 (VPLKIEPESPKETKKVQKGKTESPFDLTTKRKEEKA) show a composition bias toward basic and acidic residues. The CTBP-binding motif 1 signature appears at 554-558 (PFDLT). Positions 569 to 583 (NVPSKSGAPTSSNHD) are enriched in polar residues. The CTBP-binding motif 2 signature appears at 585-589 (PLDLS). Residues 591–601 (GSRSRAATTKQ) are compositionally biased toward polar residues. Positions 602–621 (TEPRKNHIFNEKKDMDPELP) are enriched in basic and acidic residues. C2H2-type zinc fingers lie at residues 734–756 (YTCRYCGKIFPRSANLTRHLRTH), 762–785 (YRCKYCDRSFSISSNLQRHVRNIH), and 791–813 (FKCHLCDRCFGQQTNLDRHLKKH). 2 disordered regions span residues 813–837 (HENGNLSGTAASSPHSEIEGTGPIL) and 922–957 (SVDEYEEGGKSEVNSKVSPSRYDDEDDDDDEEEDFK). A compositionally biased stretch (polar residues) spans 816–827 (GNLSGTAASSPH). Over residues 944-954 (DDEDDDDDEEE) the composition is skewed to acidic residues.

Homooligomer. Interacts with ctbp. Expressed dynamically during embryonic development; in the developing pronephros, specific areas of the brain (forebrain, midbrain and hindbrain), and in the majority of the visceral arch, and head mesenchyme derived from neural crest cells. Within the pronephros, expressed in the ventroposterior region of the pronephros anlagen from stage 20 (and is absent from the splanchnic layer that forms the glomus), then expression becomes restricted to the distal tubule and duct by the tadpole stage. In adults, expressed in various tissues including kidney, lung, testis, spleen and stomach.

The protein resides in the nucleus. It localises to the nucleus speckle. Its function is as follows. Transcriptional repressor during pronephros development. Plays a role in regionalization of the pronephros; may promote formation of the distal tubule and duct over formation of the glomus and proximal tubule. The sequence is that of MDS1 and EVI1 complex locus protein EVI1-A (mecom-a) from Xenopus laevis (African clawed frog).